Consider the following 319-residue polypeptide: D-alanine--D-alanine ligase B (319 aa).

Positions 117–312 (KQVWQSLGPA…FQQLVLAILA (196 aa)) constitute an ATP-grasp domain. 143–198 (ATELGFPLIVKPAHEGSSIGMAKVNSVDELIAAWKAASTYDSQVLVEQWIQGPEFT) provides a ligand contact to ATP. The Mg(2+) site is built by aspartate 266, glutamate 279, and asparagine 281.

This sequence belongs to the D-alanine--D-alanine ligase family. Mg(2+) is required as a cofactor. Mn(2+) serves as cofactor.

It localises to the cytoplasm. It catalyses the reaction 2 D-alanine + ATP = D-alanyl-D-alanine + ADP + phosphate + H(+). It participates in cell wall biogenesis; peptidoglycan biosynthesis. Functionally, cell wall formation. This Pseudomonas syringae pv. tomato (strain ATCC BAA-871 / DC3000) protein is D-alanine--D-alanine ligase B.